Consider the following 818-residue polypeptide: Glycerol-3-phosphate acyltransferase (818 aa).

The HXXXXD motif signature appears at 305-310 (CHRSHM).

The protein belongs to the GPAT/DAPAT family.

The protein resides in the cell inner membrane. It carries out the reaction sn-glycerol 3-phosphate + an acyl-CoA = a 1-acyl-sn-glycero-3-phosphate + CoA. It functions in the pathway phospholipid metabolism; CDP-diacylglycerol biosynthesis; CDP-diacylglycerol from sn-glycerol 3-phosphate: step 1/3. This is Glycerol-3-phosphate acyltransferase from Edwardsiella ictaluri (strain 93-146).